Consider the following 575-residue polypeptide: Proline--tRNA ligase (575 aa).

It belongs to the class-II aminoacyl-tRNA synthetase family. ProS type 1 subfamily. As to quaternary structure, homodimer.

The protein resides in the cytoplasm. It catalyses the reaction tRNA(Pro) + L-proline + ATP = L-prolyl-tRNA(Pro) + AMP + diphosphate. Functionally, catalyzes the attachment of proline to tRNA(Pro) in a two-step reaction: proline is first activated by ATP to form Pro-AMP and then transferred to the acceptor end of tRNA(Pro). As ProRS can inadvertently accommodate and process non-cognate amino acids such as alanine and cysteine, to avoid such errors it has two additional distinct editing activities against alanine. One activity is designated as 'pretransfer' editing and involves the tRNA(Pro)-independent hydrolysis of activated Ala-AMP. The other activity is designated 'posttransfer' editing and involves deacylation of mischarged Ala-tRNA(Pro). The misacylated Cys-tRNA(Pro) is not edited by ProRS. The sequence is that of Proline--tRNA ligase from Heliobacterium modesticaldum (strain ATCC 51547 / Ice1).